Here is a 350-residue protein sequence, read N- to C-terminus: Uroporphyrinogen decarboxylase (350 aa).

Residues 28–32 (RQAGR), F47, D78, Y155, S210, and H325 each bind substrate.

Belongs to the uroporphyrinogen decarboxylase family. As to quaternary structure, homodimer.

The protein localises to the cytoplasm. The catalysed reaction is uroporphyrinogen III + 4 H(+) = coproporphyrinogen III + 4 CO2. The protein operates within porphyrin-containing compound metabolism; protoporphyrin-IX biosynthesis; coproporphyrinogen-III from 5-aminolevulinate: step 4/4. Catalyzes the decarboxylation of four acetate groups of uroporphyrinogen-III to yield coproporphyrinogen-III. The protein is Uroporphyrinogen decarboxylase of Synechocystis sp. (strain ATCC 27184 / PCC 6803 / Kazusa).